The following is a 357-amino-acid chain: U3 small nucleolar ribonucleoprotein protein LCP5 (357 aa).

Serine 2 is subject to N-acetylserine. Disordered stretches follow at residues 146-211 (STLV…YKPP) and 301-357 (NKAE…QRRL). A compositionally biased stretch (acidic residues) spans 155–166 (DDSEDDESSEDE). The segment covering 171–183 (PNTSGIINTNKKS) has biased composition (polar residues). Basic and acidic residues-rich tracts occupy residues 187 to 196 (RVEETAKQEN) and 348 to 357 (SAWDRAQRRL).

The protein resides in the nucleus. Its subcellular location is the nucleolus. Its function is as follows. Component of the U3 small nucleolar ribonucleoprotein. Required for the early cleavages at sites A0, A1 and A2 of the pre-ribosomal RNA. Participates in ribosome biogenesis. The chain is U3 small nucleolar ribonucleoprotein protein LCP5 (LCP5) from Saccharomyces cerevisiae (strain ATCC 204508 / S288c) (Baker's yeast).